The sequence spans 322 residues: Ubiquitin-conjugating enzyme E2 U (322 aa).

The UBC core domain maps to 4–153 (RAYLLLQRDF…LKLFNRPLQM (150 aa)). Catalysis depends on cysteine 89, which acts as the Glycyl thioester intermediate.

It belongs to the ubiquitin-conjugating enzyme family. Post-translationally, autoubiquitinated in vitro in the presence of UBR5.

It carries out the reaction S-ubiquitinyl-[E1 ubiquitin-activating enzyme]-L-cysteine + [E2 ubiquitin-conjugating enzyme]-L-cysteine = [E1 ubiquitin-activating enzyme]-L-cysteine + S-ubiquitinyl-[E2 ubiquitin-conjugating enzyme]-L-cysteine.. Its pathway is protein modification; protein ubiquitination. In terms of biological role, catalyzes the covalent attachment of ubiquitin to other proteins. The sequence is that of Ubiquitin-conjugating enzyme E2 U (UBE2U) from Macaca fascicularis (Crab-eating macaque).